Reading from the N-terminus, the 521-residue chain is Biotinidase (521 aa).

Positions 1 to 25 (MSGARTAHALVFLLGCSALALGVCS) are cleaved as a signal peptide. Residues 50-329 (NPLELSSRQQ…QGLVGTENTT (280 aa)) enclose the CN hydrolase domain. The Proton acceptor role is filled by glutamate 90. Residues asparagine 128 and asparagine 181 are each glycosylated (N-linked (GlcNAc...) asparagine). Catalysis depends on lysine 190, which acts as the Proton donor. Cysteine 223 (nucleophile) is an active-site residue. Residue asparagine 380 is glycosylated (N-linked (GlcNAc...) asparagine).

This sequence belongs to the carbon-nitrogen hydrolase superfamily. BTD/VNN family.

It is found in the secreted. The protein localises to the extracellular space. It carries out the reaction biocytin + H2O = biotin + L-lysine. It catalyses the reaction biotin amide + H2O = biotin + NH4(+). Its function is as follows. Catalytic release of biotin from biocytin, the product of biotin-dependent carboxylases degradation. This is Biotinidase from Rattus norvegicus (Rat).